The chain runs to 433 residues: Gamma-glutamyl phosphate reductase (433 aa).

It belongs to the gamma-glutamyl phosphate reductase family.

It is found in the cytoplasm. It carries out the reaction L-glutamate 5-semialdehyde + phosphate + NADP(+) = L-glutamyl 5-phosphate + NADPH + H(+). The protein operates within amino-acid biosynthesis; L-proline biosynthesis; L-glutamate 5-semialdehyde from L-glutamate: step 2/2. Functionally, catalyzes the NADPH-dependent reduction of L-glutamate 5-phosphate into L-glutamate 5-semialdehyde and phosphate. The product spontaneously undergoes cyclization to form 1-pyrroline-5-carboxylate. This is Gamma-glutamyl phosphate reductase from Rhodopseudomonas palustris (strain BisB18).